The primary structure comprises 167 residues: Zymogen granule membrane protein 16 (167 aa).

The first 16 residues, 1–16 (MLAVALLVLLCASASA), serve as a signal peptide directing secretion. The Jacalin-type lectin domain maps to 24-159 (SSYSGEYGGK…IDSISLHWDT (136 aa)).

This sequence belongs to the jacalin lectin family.

Its subcellular location is the secreted. It is found in the extracellular space. The protein resides in the extracellular matrix. The protein localises to the zymogen granule lumen. It localises to the golgi apparatus lumen. In terms of biological role, may play a role in protein trafficking. May act as a linker molecule between the submembranous matrix on the luminal side of zymogen granule membrane (ZGM) and aggregated secretory proteins during granule formation in the TGN. The sequence is that of Zymogen granule membrane protein 16 (Zg16) from Mus musculus (Mouse).